Consider the following 268-residue polypeptide: Undecaprenyl-diphosphatase (268 aa).

7 helical membrane-spanning segments follow: residues 47 to 67, 83 to 103, 109 to 129, 144 to 164, 184 to 204, 218 to 238, and 246 to 266; these read FAIL…FFKL, FIIG…IAGK, LFDP…LLWV, YPLL…IPGV, AAEF…VYDF, LVAI…KAFL, and FVLF…ALAL.

The protein belongs to the UppP family.

The protein localises to the cell inner membrane. The catalysed reaction is di-trans,octa-cis-undecaprenyl diphosphate + H2O = di-trans,octa-cis-undecaprenyl phosphate + phosphate + H(+). In terms of biological role, catalyzes the dephosphorylation of undecaprenyl diphosphate (UPP). Confers resistance to bacitracin. This is Undecaprenyl-diphosphatase from Bradyrhizobium sp. (strain BTAi1 / ATCC BAA-1182).